Here is a 119-residue protein sequence, read N- to C-terminus: MSIGKNVARLRRAKSTRVHIRKLGVPRLSVLRTGRHLYAQIFTADGSKVIAAANTLQSQVKDGLKNGKNSLAATKVGKLIAERAKAVGVDRIAFDRSGYLYHGRIKILADAARDAGLKF.

It belongs to the universal ribosomal protein uL18 family. As to quaternary structure, part of the 50S ribosomal subunit; part of the 5S rRNA/L5/L18/L25 subcomplex. Contacts the 5S and 23S rRNAs.

In terms of biological role, this is one of the proteins that bind and probably mediate the attachment of the 5S RNA into the large ribosomal subunit, where it forms part of the central protuberance. The protein is Large ribosomal subunit protein uL18 of Xylella fastidiosa (strain 9a5c).